The following is a 233-amino-acid chain: C-type lectin domain family 2 member D6 (233 aa).

The segment at 1 to 45 (MPSSAHLQDSPPLLSRTLTQNEGQTSLRQSSSCGPSATSASESLS) is disordered. The Cytoplasmic portion of the chain corresponds to 1–73 (MPSSAHLQDS…GIILPESPAK (73 aa)). Residues 16-29 (RTLTQNEGQTSLRQ) show a composition bias toward polar residues. Over residues 30–43 (SSSCGPSATSASES) the composition is skewed to low complexity. A helical; Signal-anchor for type II membrane protein transmembrane segment spans residues 74–94 (LLCCCAVIVVLSVAVVALSVA). At 95–233 (LSVKKTPQIS…KLNSYTSQCQ (139 aa)) the chain is on the extracellular side. Positions 119–230 (VGNKCYYFNE…ICSKLNSYTS (112 aa)) constitute a C-type lectin domain. N-linked (GlcNAc...) asparagine glycosylation is present at asparagine 132.

It is found in the cell membrane. In terms of biological role, lectin-type cell surface receptor. The polypeptide is C-type lectin domain family 2 member D6 (Clec2d6) (Rattus norvegicus (Rat)).